The primary structure comprises 334 residues: Heat-inducible transcription repressor HrcA (334 aa).

It belongs to the HrcA family.

Its function is as follows. Negative regulator of class I heat shock genes (grpE-dnaK-dnaJ and groELS operons). Prevents heat-shock induction of these operons. The polypeptide is Heat-inducible transcription repressor HrcA (Paracidovorax citrulli (strain AAC00-1) (Acidovorax citrulli)).